Reading from the N-terminus, the 163-residue chain is Nucleotide-binding protein PMI0103 (163 aa).

This sequence belongs to the YajQ family.

Functionally, nucleotide-binding protein. This chain is Nucleotide-binding protein PMI0103, found in Proteus mirabilis (strain HI4320).